Reading from the N-terminus, the 375-residue chain is Histidine biosynthesis bifunctional protein HisB (375 aa).

The segment at 1-168 (MTPILFVDRD…GIAHELADAP (168 aa)) is histidinol-phosphatase. Catalysis depends on aspartate 8, which acts as the Nucleophile. Residues aspartate 8, aspartate 10, and aspartate 128 each contribute to the Mg(2+) site. Residue aspartate 10 is the Proton donor of the active site. Residues 169–375 (RRAVVQRNTK…TALPSTKGAL (207 aa)) are imidazoleglycerol-phosphate dehydratase.

It in the N-terminal section; belongs to the histidinol-phosphatase family. This sequence in the C-terminal section; belongs to the imidazoleglycerol-phosphate dehydratase family. Requires Mg(2+) as cofactor.

It is found in the cytoplasm. The catalysed reaction is D-erythro-1-(imidazol-4-yl)glycerol 3-phosphate = 3-(imidazol-4-yl)-2-oxopropyl phosphate + H2O. The enzyme catalyses L-histidinol phosphate + H2O = L-histidinol + phosphate. It participates in amino-acid biosynthesis; L-histidine biosynthesis; L-histidine from 5-phospho-alpha-D-ribose 1-diphosphate: step 6/9. It functions in the pathway amino-acid biosynthesis; L-histidine biosynthesis; L-histidine from 5-phospho-alpha-D-ribose 1-diphosphate: step 8/9. The chain is Histidine biosynthesis bifunctional protein HisB from Xanthomonas campestris pv. campestris (strain B100).